Reading from the N-terminus, the 390-residue chain is Formate-dependent phosphoribosylglycinamide formyltransferase (390 aa).

Residues 19–20 and Glu79 each bind N(1)-(5-phospho-beta-D-ribosyl)glycinamide; that span reads EL. ATP contacts are provided by residues Arg111, Lys152, 157–162, 192–195, and Glu200; these read SSGKGQ and EGFV. The ATP-grasp domain maps to 116 to 305; the sequence is RLAAEELGLP…EFAIHARAIL (190 aa). Mg(2+)-binding residues include Glu264 and Glu276. N(1)-(5-phospho-beta-D-ribosyl)glycinamide contacts are provided by residues Asp283, Lys353, and 360–361; that span reads RR.

Belongs to the PurK/PurT family. As to quaternary structure, homodimer.

The enzyme catalyses N(1)-(5-phospho-beta-D-ribosyl)glycinamide + formate + ATP = N(2)-formyl-N(1)-(5-phospho-beta-D-ribosyl)glycinamide + ADP + phosphate + H(+). The protein operates within purine metabolism; IMP biosynthesis via de novo pathway; N(2)-formyl-N(1)-(5-phospho-D-ribosyl)glycinamide from N(1)-(5-phospho-D-ribosyl)glycinamide (formate route): step 1/1. Functionally, involved in the de novo purine biosynthesis. Catalyzes the transfer of formate to 5-phospho-ribosyl-glycinamide (GAR), producing 5-phospho-ribosyl-N-formylglycinamide (FGAR). Formate is provided by PurU via hydrolysis of 10-formyl-tetrahydrofolate. This Marinobacter nauticus (strain ATCC 700491 / DSM 11845 / VT8) (Marinobacter aquaeolei) protein is Formate-dependent phosphoribosylglycinamide formyltransferase.